The following is a 470-amino-acid chain: Uronate isomerase (470 aa).

Belongs to the metallo-dependent hydrolases superfamily. Uronate isomerase family.

The enzyme catalyses D-glucuronate = D-fructuronate. It carries out the reaction aldehydo-D-galacturonate = keto-D-tagaturonate. The protein operates within carbohydrate metabolism; pentose and glucuronate interconversion. The protein is Uronate isomerase of Salmonella typhi.